Reading from the N-terminus, the 285-residue chain is 1,4-dihydroxy-2-naphthoyl-CoA synthase (285 aa).

Substrate is bound by residues R45, 84 to 89, Y97, 129 to 133, T155, S161, Y258, and K273; these read SGGDQK and YSIGG. 154–156 contributes to the hydrogencarbonate binding site; sequence QTG.

Belongs to the enoyl-CoA hydratase/isomerase family. MenB subfamily. In terms of assembly, homohexamer. Dimer of a homotrimer. Requires hydrogencarbonate as cofactor.

It catalyses the reaction 2-succinylbenzoyl-CoA + H(+) = 1,4-dihydroxy-2-naphthoyl-CoA + H2O. It functions in the pathway quinol/quinone metabolism; 1,4-dihydroxy-2-naphthoate biosynthesis; 1,4-dihydroxy-2-naphthoate from chorismate: step 6/7. Its pathway is quinol/quinone metabolism; menaquinone biosynthesis. Its activity is regulated as follows. Inhibited by sulfite and nitrate. Converts o-succinylbenzoyl-CoA (OSB-CoA) to 1,4-dihydroxy-2-naphthoyl-CoA (DHNA-CoA). This chain is 1,4-dihydroxy-2-naphthoyl-CoA synthase, found in Escherichia coli (strain K12).